The chain runs to 205 residues: Shieldin complex subunit 1 (205 aa).

In terms of assembly, component of the shieldin complex, consisting of SHLD1, SHLD2, SHLD3 and MAD2L2/REV7. Within the complex, SHLD2 forms a scaffold which interacts with a SHLD3-MAD2L2 subcomplex via its N-terminus, and with SHLD1 via its C-terminus. Interacts with ASTE1.

The protein localises to the chromosome. Functionally, component of the shieldin complex, which plays an important role in repair of DNA double-stranded breaks (DSBs). During G1 and S phase of the cell cycle, the complex functions downstream of TP53BP1 to promote non-homologous end joining (NHEJ) and suppress DNA end resection. Mediates various NHEJ-dependent processes including immunoglobulin class-switch recombination, and fusion of unprotected telomeres. This chain is Shieldin complex subunit 1, found in Homo sapiens (Human).